A 400-amino-acid chain; its full sequence is Argininosuccinate synthase (400 aa).

ATP contacts are provided by residues Ala10–Ser18 and Ala38. Tyr89 serves as a coordination point for L-citrulline. Gly119 contacts ATP. 3 residues coordinate L-aspartate: Thr121, Asn125, and Asp126. Asn125 is a binding site for L-citrulline. L-citrulline is bound by residues Arg129, Ser177, Ser186, Glu262, and Tyr274.

Belongs to the argininosuccinate synthase family. Type 1 subfamily. Homotetramer.

The protein resides in the cytoplasm. It catalyses the reaction L-citrulline + L-aspartate + ATP = 2-(N(omega)-L-arginino)succinate + AMP + diphosphate + H(+). The protein operates within amino-acid biosynthesis; L-arginine biosynthesis; L-arginine from L-ornithine and carbamoyl phosphate: step 2/3. With respect to regulation, activity decreases to 53.9% and 18.4% in the presence of 1 mM and 5 mM arginine, respectively. Activity also decreases to 80.1%, 78.1% and 92.1% in the presence of 5 mM ornithine, lysine and succinate, respectively. Activity does not decrease in the presence of glutamate, glutamine or asparagine. Functionally, catalyzes the condensation of citrulline and aspartate into argininosuccinate, the immediate precursor of arginine. SyArgG is the rate-limiting step in arginine biosynthesis in Synechocystis PCC 6803. This chain is Argininosuccinate synthase, found in Synechocystis sp. (strain ATCC 27184 / PCC 6803 / Kazusa).